The primary structure comprises 404 residues: Cysteine--tRNA ligase (404 aa).

Zn(2+) is bound at residue cysteine 14. The 'HIGH' region motif lies at 16-26 (PTVYSDVHIGN). Residues cysteine 190, histidine 216, and glutamate 220 each coordinate Zn(2+). Residues 248-252 (KMAKS) carry the 'KMSKS' region motif. Lysine 251 provides a ligand contact to ATP.

Belongs to the class-I aminoacyl-tRNA synthetase family. In terms of assembly, monomer. Requires Zn(2+) as cofactor.

The protein resides in the cytoplasm. It carries out the reaction tRNA(Cys) + L-cysteine + ATP = L-cysteinyl-tRNA(Cys) + AMP + diphosphate. This is Cysteine--tRNA ligase from Mesomycoplasma hyopneumoniae (strain 232) (Mycoplasma hyopneumoniae).